Here is a 261-residue protein sequence, read N- to C-terminus: Glutamate racemase (261 aa).

Substrate is bound by residues 12-13 (DS) and 44-45 (YG). Cys76 acts as the Proton donor/acceptor in catalysis. 77–78 (NT) is a substrate binding site. Catalysis depends on Cys180, which acts as the Proton donor/acceptor. 181-182 (TH) is a substrate binding site.

This sequence belongs to the aspartate/glutamate racemases family.

It carries out the reaction L-glutamate = D-glutamate. The protein operates within cell wall biogenesis; peptidoglycan biosynthesis. Functionally, provides the (R)-glutamate required for cell wall biosynthesis. This is Glutamate racemase from Borreliella burgdorferi (strain ATCC 35210 / DSM 4680 / CIP 102532 / B31) (Borrelia burgdorferi).